A 493-amino-acid polypeptide reads, in one-letter code: Putative lon protease homolog (493 aa).

52–59 provides a ligand contact to ATP; that stretch reads GPPGVGKS.

It belongs to the peptidase S16 family.

The chain is Putative lon protease homolog from Thermoplasma acidophilum (strain ATCC 25905 / DSM 1728 / JCM 9062 / NBRC 15155 / AMRC-C165).